Reading from the N-terminus, the 1169-residue chain is Zinc finger protein 862 (1169 aa).

The region spanning 11-77 (VTFDDITVYL…SVQGQRSLLE (67 aa)) is the KRAB 1 domain. The TTF-type 1 zinc-finger motif lies at 135-218 (KPRSIQKSWF…RDPIWAARFR (84 aa)). The 72-residue stretch at 333 to 404 (VVFEDVAVYF…DPNGPKWGKG (72 aa)) folds into the KRAB 2 domain. The TTF-type 2 zinc finger occupies 461 to 544 (RPRSIQRSWF…KEDTPHTALV (84 aa)).

Its subcellular location is the nucleus. Functionally, may be involved in transcriptional regulation. The polypeptide is Zinc finger protein 862 (ZNF862) (Homo sapiens (Human)).